A 298-amino-acid chain; its full sequence is Tyrosine recombinase XerC (298 aa).

The 87-residue stretch at 2–88 (TDLHTDVERY…ALRSFFDWLV (87 aa)) folds into the Core-binding (CB) domain. Residues 109–288 (HLPKNIDVDD…DFQHLASVYD (180 aa)) form the Tyr recombinase domain. Active-site residues include R148, K172, H240, R243, and H266. Y275 (O-(3'-phospho-DNA)-tyrosine intermediate) is an active-site residue.

Belongs to the 'phage' integrase family. XerC subfamily. Forms a cyclic heterotetrameric complex composed of two molecules of XerC and two molecules of XerD, in which XerC interacts with XerD via its C-terminal region, XerD interacts with XerC via its C-terminal region and so on.

The protein resides in the cytoplasm. FtsK may regulate the catalytic switch between XerC and XerD in the heterotetrameric complex during the two steps of the recombination process. Functionally, site-specific tyrosine recombinase, which acts by catalyzing the cutting and rejoining of the recombining DNA molecules. Binds cooperatively to specific DNA consensus sequences that are separated from XerD binding sites by a short central region, forming the heterotetrameric XerC-XerD complex that recombines DNA substrates. The complex is essential to convert dimers of the bacterial chromosome into monomers to permit their segregation at cell division. It also contributes to the segregational stability of plasmids. In the complex XerC specifically exchanges the top DNA strands. This Shigella dysenteriae serotype 1 (strain Sd197) protein is Tyrosine recombinase XerC.